The sequence spans 359 residues: Aflatoxin B1 aldehyde reductase member 2 (359 aa).

The N-terminal 38 residues, 1-38 (MLSAASRVVSRAAVHCALRSPPPEARALAMSRPPPPRV), are a transit peptide targeting the mitochondrion. At S40 the chain carries Phosphoserine. D72 serves as a coordination point for NADP(+). The active-site Proton donor is the Y77. Position 128 is an N6-acetyllysine (K128). H141 lines the substrate pocket. Residues 171–172 (SN), Q197, 226–236 (NPLAGGLLTGK), and R250 each bind NADP(+). Position 236 is an N6-succinyllysine (K236). Phosphoserine is present on S255. Residues Y260 and R263 each coordinate substrate. 318-326 (SSLEQLEQN) lines the NADP(+) pocket. R359 contacts substrate.

The protein belongs to the aldo/keto reductase family. Aldo/keto reductase 2 subfamily. As to quaternary structure, homodimer. Detected in brain, liver, small intestine and testis, and at lower levels in heart, prostate, skeletal muscle and spleen. Detected in kidney proximal and distal tubules, endothelial cells lining the Bowman's capsules and some cysts. Detected at low levels in lung and pancreas (at protein level). Widely expressed.

Its subcellular location is the mitochondrion. The protein localises to the golgi apparatus. It localises to the cytoplasm. It catalyses the reaction 4-hydroxybutanoate + NADP(+) = succinate semialdehyde + NADPH + H(+). Functionally, catalyzes the NADPH-dependent reduction of succinic semialdehyde to gamma-hydroxybutyrate. May have an important role in producing the neuromodulator gamma-hydroxybutyrate (GHB). Has broad substrate specificity. Has NADPH-dependent aldehyde reductase activity towards 2-carboxybenzaldehyde, 2-nitrobenzaldehyde and pyridine-2-aldehyde (in vitro). Can reduce 1,2-naphthoquinone and 9,10-phenanthrenequinone (in vitro). Can reduce the dialdehyde protein-binding form of aflatoxin B1 (AFB1) to the non-binding AFB1 dialcohol. May be involved in protection of liver against the toxic and carcinogenic effects of AFB1, a potent hepatocarcinogen. In Homo sapiens (Human), this protein is Aflatoxin B1 aldehyde reductase member 2 (AKR7A2).